Consider the following 110-residue polypeptide: Nucleoid-associated protein ESA_02800 (110 aa).

Residues 89–110 (QKEKMASVSSGMQLPPGFKMPF) are disordered.

The protein belongs to the YbaB/EbfC family. As to quaternary structure, homodimer.

Its subcellular location is the cytoplasm. It is found in the nucleoid. Its function is as follows. Binds to DNA and alters its conformation. May be involved in regulation of gene expression, nucleoid organization and DNA protection. The sequence is that of Nucleoid-associated protein ESA_02800 from Cronobacter sakazakii (strain ATCC BAA-894) (Enterobacter sakazakii).